We begin with the raw amino-acid sequence, 593 residues long: UvrABC system protein C (593 aa).

Positions Thr13–Val91 constitute a GIY-YIG domain. A UVR domain is found at Asp202 to Ile237.

This sequence belongs to the UvrC family. As to quaternary structure, interacts with UvrB in an incision complex.

Its subcellular location is the cytoplasm. In terms of biological role, the UvrABC repair system catalyzes the recognition and processing of DNA lesions. UvrC both incises the 5' and 3' sides of the lesion. The N-terminal half is responsible for the 3' incision and the C-terminal half is responsible for the 5' incision. This Caldicellulosiruptor saccharolyticus (strain ATCC 43494 / DSM 8903 / Tp8T 6331) protein is UvrABC system protein C.